Here is an 888-residue protein sequence, read N- to C-terminus: Mitogen-activated protein kinase kinase kinase 12 (888 aa).

Residues 26-42 (MRKLDPDTSDCTPEKDL) are compositionally biased toward basic and acidic residues. Positions 26-104 (MRKLDPDTSD…TGSPESRASR (79 aa)) are disordered. Phosphothreonine is present on residues Thr-37 and Thr-43. Residues 64 to 75 (SPSPGGEPPPEP) are compositionally biased toward pro residues. The region spanning 158-399 (ILDLQWVGSG…FRQILLHLDI (242 aa)) is the Protein kinase domain. ATP contacts are provided by residues 164-172 (VGSGAQGAV) and Lys-185. The active-site Proton acceptor is Asp-269. Leucine-zipper regions lie at residues 423 to 444 (VKLHFEKIKSEGTCLHRLEEEL) and 476 to 497 (LNALMLQLELKERELLRREQAL). The tract at residues 557-620 (GVGLPGCPKA…GGLGVGPTAW (64 aa)) is disordered. The span at 572-584 (RSRRGKTRHRKAS) shows a compositional bias: basic residues. Residues 605 to 615 (GGLGSPGGLGV) are compositionally biased toward gly residues. Ser-640 carries the phosphoserine modification. 2 disordered regions span residues 654–731 (RGRG…YQHL) and 743–888 (TRSQ…SLPP). Residues 704-725 (PGEGVGLLGTGREGTTGRGGSR) show a composition bias toward gly residues. A compositionally biased stretch (acidic residues) spans 752-763 (SEEEEGEVDSEV). 2 stretches are compositionally biased toward polar residues: residues 776–789 (NMRQSLSTFSSENP) and 798–812 (SEPSPSGTPEVGSTN). A compositionally biased stretch (basic and acidic residues) spans 813 to 823 (TDERPDERSDD).

This sequence belongs to the protein kinase superfamily. STE Ser/Thr protein kinase family. MAP kinase kinase kinase subfamily. As to quaternary structure, homodimer. Interacts with MBIP. Mg(2+) serves as cofactor. Post-translationally, autophosphorylated on Ser/Thr. Phosphorylated in cytosol under basal conditions and dephosphorylated when membrane-associated. The activity of MAP3K12 can be regulated through its proteasomal degradation. APOE, through a receptor-mediated mechanism, activates MAP3K12 by preventing its proteasomal degradation.

Its subcellular location is the cytoplasm. It is found in the cell membrane. It catalyses the reaction L-seryl-[protein] + ATP = O-phospho-L-seryl-[protein] + ADP + H(+). The catalysed reaction is L-threonyl-[protein] + ATP = O-phospho-L-threonyl-[protein] + ADP + H(+). Part of a non-canonical MAPK signaling pathway. Activated by APOE, enhances the AP-1-mediated transcription of APP, via a MAP kinase signal transduction pathway composed of MAP2K7 and MAPK1/ERK2 and MAPK3/ERK1. May be an activator of the JNK/SAPK pathway. This Rattus norvegicus (Rat) protein is Mitogen-activated protein kinase kinase kinase 12 (Map3k12).